Reading from the N-terminus, the 291-residue chain is Light-independent protochlorophyllide reductase iron-sulfur ATP-binding protein (291 aa).

ATP-binding positions include 10–15 (GIGKST) and K39. S14 contributes to the Mg(2+) binding site. Residues C95 and C129 each coordinate [4Fe-4S] cluster. 180 to 181 (NR) serves as a coordination point for ATP.

This sequence belongs to the NifH/BchL/ChlL family. As to quaternary structure, homodimer. Protochlorophyllide reductase is composed of three subunits; ChlL, ChlN and ChlB. The cofactor is [4Fe-4S] cluster.

The protein localises to the plastid. Its subcellular location is the chloroplast. The enzyme catalyses chlorophyllide a + oxidized 2[4Fe-4S]-[ferredoxin] + 2 ADP + 2 phosphate = protochlorophyllide a + reduced 2[4Fe-4S]-[ferredoxin] + 2 ATP + 2 H2O. The protein operates within porphyrin-containing compound metabolism; chlorophyll biosynthesis (light-independent). In terms of biological role, component of the dark-operative protochlorophyllide reductase (DPOR) that uses Mg-ATP and reduced ferredoxin to reduce ring D of protochlorophyllide (Pchlide) to form chlorophyllide a (Chlide). This reaction is light-independent. The L component serves as a unique electron donor to the NB-component of the complex, and binds Mg-ATP. The chain is Light-independent protochlorophyllide reductase iron-sulfur ATP-binding protein from Pinus koraiensis (Korean pine).